Reading from the N-terminus, the 301-residue chain is Hepatitis A virus cellular receptor 2 (301 aa).

The signal sequence occupies residues 1–21 (MFSHLPFDCVLLLLLLLLTRS). In terms of domain architecture, Ig-like V-type spans 22-124 (SEVEYRAEVG…PGIMNDEKFN (103 aa)). At 22–202 (SEVEYRAEVG…RDSGATIRIG (181 aa)) the chain is on the extracellular side. Intrachain disulfides connect Cys-38-Cys-110, Cys-52-Cys-63, and Cys-58-Cys-109. An a 1,2-diacyl-sn-glycero-3-phospho-L-serine-binding site is contributed by Arg-111. Gly-116 serves as a coordination point for Ca(2+). Met-118 contacts a 1,2-diacyl-sn-glycero-3-phospho-L-serine. Asn-119 contacts Ca(2+). Thr-145 carries O-linked (GalNAc...) threonine glycosylation. The N-linked (GlcNAc...) asparagine glycan is linked to Asn-172. Residues 203 to 223 (IYIGAGICAGLALALIFGALI) traverse the membrane as a helical segment. Residues 224–301 (FKWYSHSKEK…QPLGCRFAMP (78 aa)) lie on the Cytoplasmic side of the membrane. Tyr-265 carries the post-translational modification Phosphotyrosine; by ITK. The S-palmitoyl cysteine moiety is linked to residue Cys-296.

It belongs to the immunoglobulin superfamily. TIM family. As to quaternary structure, interacts with HMGB1; impairs HMGB1 binding to B-DNA and likely HMGB1-mediated innate immune response. Interacts with BAG6. Interacts (phosphorylated) with PIK3R1 and PIK3R2. Interacts (not dependent on its phosphorylation status) with FYN. Interacts (in basal state T-cells) with VAV1; AKT1/2, LCP2, ZAP70, SYK, PIK3R1, FYN, SH3BP2 and SH2D2A. Interacts (in activated T-cells) with LCK and PLCG. Interacts with ILF3; this interaction promotes ILF3 ubiquitination and degradation. Post-translationally, O-glycosylated with core 1 or possibly core 8 glycans. Phosphorylated on tyrosine residues; modestly increased after TCR/CD28 stimulation. Can be phosphorylated in the cytoplasmic domain by FYN. Phosphorylation at Tyr-265 is increased by stimulation with ligand LGALS9. In terms of processing, palmitoylated by ZDHHC9 at Cys-296; palmitoylation stabilizes HAVCR2 by preventing binding to E3 ubiquitin ligase SYVN1, thereby suppressing its polyubiquitination and degradation. Post-translationally, ubiquitinated by SYVN1, leading to polyubiquitination and proteasomal degradation. Expressed in T-helper type 1 (Th1) lymphocytes. Expressed on regulatory T (Treg) cells after TCR stimulation. Expressed in dendritic cells and natural killer (NK) cells. Expressed in epithelial tissues. Expression is increased on CD4+ and CD8+ T-cells in chronic hepatitis C virus (HCV) infection. In progressive HIV-1 infection, expression is up-regulated on HIV-1-specific CD8 T-cells.

The protein resides in the cell membrane. It localises to the cell junction. Its function is as follows. Cell surface receptor implicated in modulating innate and adaptive immune responses. Generally accepted to have an inhibiting function. Reports on stimulating functions suggest that the activity may be influenced by the cellular context and/or the respective ligand. Regulates macrophage activation. Inhibits T-helper type 1 lymphocyte (Th1)-mediated auto- and alloimmune responses and promotes immunological tolerance. In CD8+ cells attenuates TCR-induced signaling, specifically by blocking NF-kappaB and NFAT promoter activities resulting in the loss of IL-2 secretion. The function may implicate its association with LCK proposed to impair phosphorylation of TCR subunits, and/or LGALS9-dependent recruitment of PTPRC to the immunological synapse. In contrast, shown to activate TCR-induced signaling in T-cells probably implicating ZAP70, LCP2, LCK and FYN. Expressed on Treg cells can inhibit Th17 cell responses. Receptor for LGALS9. Binding to LGALS9 is believed to result in suppression of T-cell responses; the resulting apoptosis of antigen-specific cells may implicate HAVCR2 phosphorylation and disruption of its association with BAG6. Binding to LGALS9 is proposed to be involved in innate immune response to intracellular pathogens. Expressed on Th1 cells interacts with LGALS9 expressed on Mycobacterium tuberculosis-infected macrophages to stimulate antibactericidal activity including IL-1 beta secretion and to restrict intracellular bacterial growth. However, the function as receptor for LGALS9 has been challenged. Also reported to enhance CD8+ T-cell responses to an acute infection such as by Listeria monocytogenes. Receptor for phosphatidylserine (PtSer); PtSer-binding is calcium-dependent. May recognize PtSer on apoptotic cells leading to their phagocytosis. Mediates the engulfment of apoptotic cells by dendritic cells. Expressed on T-cells, promotes conjugation but not engulfment of apoptotic cells. Expressed on dendritic cells (DCs) positively regulates innate immune response and in synergy with Toll-like receptors promotes secretion of TNF-alpha. In tumor-imfiltrating DCs suppresses nucleic acid-mediated innate immune repsonse by interaction with HMGB1 and interfering with nucleic acid-sensing and trafficking of nucleid acids to endosomes. Expressed on natural killer (NK) cells acts as a coreceptor to enhance IFN-gamma production in response to LGALS9. In contrast, shown to suppress NK cell-mediated cytotoxicity. Negatively regulates NK cell function in LPS-induced endotoxic shock. This chain is Hepatitis A virus cellular receptor 2 (HAVCR2), found in Homo sapiens (Human).